Consider the following 98-residue polypeptide: NADH-ubiquinone oxidoreductase chain 4L (98 aa).

3 helical membrane passes run 1–21, 29–49, and 61–81; these read MSMVYINIFLAFTMSLMGLLM, SLLCLEGMMLSLFIMMAVAIL, and IILLVFAACEAALGLSLLVMV.

The protein belongs to the complex I subunit 4L family. As to quaternary structure, core subunit of respiratory chain NADH dehydrogenase (Complex I) which is composed of 45 different subunits.

The protein resides in the mitochondrion inner membrane. The enzyme catalyses a ubiquinone + NADH + 5 H(+)(in) = a ubiquinol + NAD(+) + 4 H(+)(out). Its function is as follows. Core subunit of the mitochondrial membrane respiratory chain NADH dehydrogenase (Complex I) which catalyzes electron transfer from NADH through the respiratory chain, using ubiquinone as an electron acceptor. Part of the enzyme membrane arm which is embedded in the lipid bilayer and involved in proton translocation. The protein is NADH-ubiquinone oxidoreductase chain 4L (MT-ND4L) of Puma concolor (Mountain lion).